The chain runs to 375 residues: tRNA-specific 2-thiouridylase MnmA (375 aa).

ATP contacts are provided by residues 20–27 (AMSGGVDS) and L46. The Nucleophile role is filled by C114. C114 and C211 are disulfide-bonded. An ATP-binding site is contributed by G138. Positions 160–162 (RDQ) are interaction with tRNA. Catalysis depends on C211, which acts as the Cysteine persulfide intermediate.

The protein belongs to the MnmA/TRMU family.

The protein resides in the cytoplasm. It catalyses the reaction S-sulfanyl-L-cysteinyl-[protein] + uridine(34) in tRNA + AH2 + ATP = 2-thiouridine(34) in tRNA + L-cysteinyl-[protein] + A + AMP + diphosphate + H(+). Functionally, catalyzes the 2-thiolation of uridine at the wobble position (U34) of tRNA, leading to the formation of s(2)U34. The sequence is that of tRNA-specific 2-thiouridylase MnmA from Ruegeria pomeroyi (strain ATCC 700808 / DSM 15171 / DSS-3) (Silicibacter pomeroyi).